We begin with the raw amino-acid sequence, 428 residues long: MTAIQKPVVAKREAPKAEVNPTVSRSTQTETIKPTKERTVSVFSPPVFNFAANSFAQSVSNEYKHASPKRIKLDNSRVQVPSIVKPKQDKPRPPAIVTKPRVINIEFPNKQKSGFKLLIRPKHEPSIKKQKQGIEVLSTSNTKRITKSISVDDVEYVEKVKHAIKQVLPKPDYDDGSLGPVILRLAWHCCATYNKFTGNGGSNGSTMRFVPEITDDGNSGLDIARSALEPIKQKFPDITYSDLWTLAGKISIQEMGGPKIPWRCGRVDCIDDRYVPPNGRLPFAYKNANHIRETFGRMGFNDRETVSLLGAHGLGRCHKRFSGWEGKWTENPTSFSNDFYKVLLDEEWSLGTVPETGKEQYYNKDKSLIMLNTDIELIRDPHFLHFVKLYSQHQATFFQDFANAFGKLLELGIERDSNGNVLPKNEFY.

A disordered region spans residues 1 to 33 (MTAIQKPVVAKREAPKAEVNPTVSRSTQTETIK). The span at 21–32 (PTVSRSTQTETI) shows a compositional bias: polar residues. Residue His188 is the Proton acceptor of the active site. His312 is a binding site for heme b. The active-site Tryptophan radical intermediate is Trp328.

This sequence belongs to the peroxidase family. Cytochrome c peroxidase subfamily. It depends on heme b as a cofactor.

Destroys radicals which are normally produced within the cells and which are toxic to biological systems. This is Putative heme-binding peroxidase from Debaryomyces hansenii (strain ATCC 36239 / CBS 767 / BCRC 21394 / JCM 1990 / NBRC 0083 / IGC 2968) (Yeast).